Consider the following 188-residue polypeptide: Auxin-induced protein 22C (188 aa).

The EAR-like (transcriptional repression) signature appears at 13 to 17; sequence LRLGL. Positions 16–57 are disordered; that stretch reads GLPGAGGENNTDKDKNKNKKRVFSDIEGENSSSEEDGKKETK. One can recognise a PB1 domain in the interval 79-167; the sequence is KLYVKVSMDG…KRLRIMKRSD (89 aa).

Belongs to the Aux/IAA family. In terms of assembly, homodimers and heterodimers.

The protein localises to the nucleus. Functionally, aux/IAA proteins are short-lived transcriptional factors that function as repressors of early auxin response genes at low auxin concentrations. Repression is thought to result from the interaction with auxin response factors (ARFs), proteins that bind to the auxin-responsive promoter element (AuxRE). Formation of heterodimers with ARF proteins may alter their ability to modulate early auxin response genes expression. The sequence is that of Auxin-induced protein 22C (AUX22C) from Vigna radiata var. radiata (Mung bean).